The chain runs to 219 residues: Deoxyribose-phosphate aldolase (219 aa).

The active-site Proton donor/acceptor is D93. The active-site Schiff-base intermediate with acetaldehyde is the K154. The Proton donor/acceptor role is filled by K179.

It belongs to the DeoC/FbaB aldolase family. DeoC type 1 subfamily.

The protein resides in the cytoplasm. It carries out the reaction 2-deoxy-D-ribose 5-phosphate = D-glyceraldehyde 3-phosphate + acetaldehyde. It participates in carbohydrate degradation; 2-deoxy-D-ribose 1-phosphate degradation; D-glyceraldehyde 3-phosphate and acetaldehyde from 2-deoxy-alpha-D-ribose 1-phosphate: step 2/2. Its function is as follows. Catalyzes a reversible aldol reaction between acetaldehyde and D-glyceraldehyde 3-phosphate to generate 2-deoxy-D-ribose 5-phosphate. This chain is Deoxyribose-phosphate aldolase, found in Haloquadratum walsbyi (strain DSM 16790 / HBSQ001).